The sequence spans 318 residues: Glycine--tRNA ligase alpha subunit (318 aa).

The segment at 298 to 318 (EAGGSSPSTSRQGEAPRGESQ) is disordered. The span at 300–309 (GGSSPSTSRQ) shows a compositional bias: polar residues.

Belongs to the class-II aminoacyl-tRNA synthetase family. As to quaternary structure, tetramer of two alpha and two beta subunits.

It localises to the cytoplasm. The enzyme catalyses tRNA(Gly) + glycine + ATP = glycyl-tRNA(Gly) + AMP + diphosphate. This chain is Glycine--tRNA ligase alpha subunit, found in Rhodopseudomonas palustris (strain BisB18).